The primary structure comprises 205 residues: Holliday junction branch migration complex subunit RuvA (205 aa).

The interval 1-64 (MIGRLRGLLV…EDAQLLYGFI (64 aa)) is domain I. A domain II region spans residues 65-143 (TKQERALFRL…SLMEASHGNE (79 aa)). The flexible linker stretch occupies residues 144-156 (REFVLQSNYTPAP). Residues 157–205 (VVNTAEEDAISALLALGYKPAQASKAVSSVFEEGMDSETLIKASLKSML) are domain III.

It belongs to the RuvA family. Homotetramer. Forms an RuvA(8)-RuvB(12)-Holliday junction (HJ) complex. HJ DNA is sandwiched between 2 RuvA tetramers; dsDNA enters through RuvA and exits via RuvB. An RuvB hexamer assembles on each DNA strand where it exits the tetramer. Each RuvB hexamer is contacted by two RuvA subunits (via domain III) on 2 adjacent RuvB subunits; this complex drives branch migration. In the full resolvosome a probable DNA-RuvA(4)-RuvB(12)-RuvC(2) complex forms which resolves the HJ.

The protein resides in the cytoplasm. Its function is as follows. The RuvA-RuvB-RuvC complex processes Holliday junction (HJ) DNA during genetic recombination and DNA repair, while the RuvA-RuvB complex plays an important role in the rescue of blocked DNA replication forks via replication fork reversal (RFR). RuvA specifically binds to HJ cruciform DNA, conferring on it an open structure. The RuvB hexamer acts as an ATP-dependent pump, pulling dsDNA into and through the RuvAB complex. HJ branch migration allows RuvC to scan DNA until it finds its consensus sequence, where it cleaves and resolves the cruciform DNA. The polypeptide is Holliday junction branch migration complex subunit RuvA (Shewanella loihica (strain ATCC BAA-1088 / PV-4)).